The sequence spans 171 residues: Co-chaperone protein HscB (171 aa).

The J domain occupies 2–74 (DYFTLFGLPA…LTRAEYLLSL (73 aa)).

Belongs to the HscB family. In terms of assembly, interacts with HscA and stimulates its ATPase activity. Interacts with IscU.

Functionally, co-chaperone involved in the maturation of iron-sulfur cluster-containing proteins. Seems to help targeting proteins to be folded toward HscA. This chain is Co-chaperone protein HscB, found in Salmonella agona (strain SL483).